Here is a 1941-residue protein sequence, read N- to C-terminus: Myosin-2 (1941 aa).

The region spanning 33-82 (DAKTSVFVAEPKESFVKGTIQSREGGKVTVKTEGGATLTVKDDQVFPMNP) is the Myosin N-terminal SH3-like domain. Thr64 and Thr69 each carry phosphothreonine. Residues 86-784 (DKIEDMAMMT…LLGLLEEMRD (699 aa)) enclose the Myosin motor domain. Lys130 bears the N6,N6,N6-trimethyllysine mark. 179–186 (GESGAGKT) is an ATP binding site. The residue at position 389 (Tyr389) is a Phosphotyrosine. Ser392 bears the Phosphoserine mark. At Thr419 the chain carries Phosphothreonine. Ser625 carries the phosphoserine modification. The segment at 661-683 (LNKLMTNLRSTHPHFVRCIIPNE) is actin-binding. His759 carries the pros-methylhistidine modification. An actin-binding region spans residues 763-777 (KFGHTKVFFKAGLLG). An IQ domain is found at 787–816 (LAQLITRTQARCRGFLARVEYQRMVERREA). Residues 845 to 1941 (LLKSAETEKE…EVHTKVISEE (1097 aa)) are a coiled coil. Phosphoserine is present on residues Ser1094 and Ser1098. Disordered regions lie at residues 1128-1149 (IEAERASRAKAEKQRSDLSREL) and 1155-1174 (RLEEAGGATSAQIEMNKKRE). Positions 1130–1149 (AERASRAKAEKQRSDLSREL) are enriched in basic and acidic residues. Phosphoserine is present on residues Ser1164 and Ser1239. Thr1243 carries the phosphothreonine modification. The residue at position 1245 (Ser1245) is a Phosphoserine. Phosphothreonine is present on Thr1257. Ser1263 bears the Phosphoserine mark. Thr1288 is subject to Phosphothreonine. 4 positions are modified to phosphoserine: Ser1290, Ser1294, Ser1305, and Ser1308. Thr1469 carries the post-translational modification Phosphothreonine. Phosphoserine is present on Ser1476. Tyr1494 bears the Phosphotyrosine mark. Residue Ser1497 is modified to Phosphoserine. A Phosphothreonine modification is found at Thr1503. A Phosphoserine modification is found at Ser1516. Position 1519 is a phosphothreonine (Thr1519). Phosphoserine is present on residues Ser1556, Ser1576, Ser1602, Ser1605, Ser1716, and Ser1728. Phosphothreonine is present on residues Thr1732 and Thr1738. Ser1741 bears the Phosphoserine mark.

It belongs to the TRAFAC class myosin-kinesin ATPase superfamily. Myosin family. Muscle myosin is a hexameric protein that consists of 2 heavy chain subunits (MHC), 2 alkali light chain subunits (MLC) and 2 regulatory light chain subunits (MLC-2). Interacts with GCSAM.

The protein resides in the cytoplasm. It localises to the myofibril. In terms of biological role, myosins are actin-based motor molecules with ATPase activity essential for muscle contraction. In Homo sapiens (Human), this protein is Myosin-2.